A 350-amino-acid chain; its full sequence is Protein RecA (350 aa).

66-73 lines the ATP pocket; it reads GPESSGKT.

The protein belongs to the RecA family.

The protein resides in the cytoplasm. Its function is as follows. Can catalyze the hydrolysis of ATP in the presence of single-stranded DNA, the ATP-dependent uptake of single-stranded DNA by duplex DNA, and the ATP-dependent hybridization of homologous single-stranded DNAs. It interacts with LexA causing its activation and leading to its autocatalytic cleavage. In Dichelobacter nodosus (strain VCS1703A), this protein is Protein RecA.